The chain runs to 334 residues: Broad-range acid phosphatase DET1 (334 aa).

His32 serves as the catalytic Tele-phosphohistidine intermediate. Residues Asn38, 44-45 (NG), and Arg108 each bind substrate. The active-site Proton donor/acceptor is Glu126. Residues 168-171 (LNNT) and 195-205 (RVKDEPRIREQ) each bind substrate. Ser248 is subject to Phosphoserine.

This sequence belongs to the phosphoglycerate mutase family.

Its subcellular location is the cytoplasm. It localises to the nucleus. Functionally, metal-independent, broad-range acid phosphatase. Involved, either directly or indirectly, in the bidirectional transport of sterols between the endoplasmic reticulum and the plasma membrane. This is Broad-range acid phosphatase DET1 (DET1) from Saccharomyces cerevisiae (strain ATCC 204508 / S288c) (Baker's yeast).